The primary structure comprises 221 residues: Translation initiation factor 6 (221 aa).

The protein belongs to the eIF-6 family.

Its function is as follows. Binds to the 50S ribosomal subunit and prevents its association with the 30S ribosomal subunit to form the 70S initiation complex. The polypeptide is Translation initiation factor 6 (Methanocella arvoryzae (strain DSM 22066 / NBRC 105507 / MRE50)).